The primary structure comprises 623 residues: MSFQKNEYSHKNVSEDNNGQGGNPPIASPLNDQQFNSLQQTVSELSSQQLAWVSGYFWGLAQHQPSAAATPIAQAAAAVSAKPAGKLTIIFASQTGNAKGVAEALEQEAKAEGIAVELFDASDYKGKNLAKETHVIIVASTNGEGEAPDNAIELHEFLQSKKAPKLSNLQYGVIALGDSSYEFFCQTGKDFDTYLAKLGATSFIERIDCDVDYEAAAEEWRKNALGKVKETLSSGNEAEIVQLPVGQAAASHSQYNKQNPYTATLLTSQKITGRDSGKDVRHIEIDLDGSGLTYQPGDALGVWYENSSELASDILGKVGLSGVETVDVDGESLSIHSALVSKFEITTSNPQLVAKFAELSGSKKLQKLAEDKDKLREYSANTQIVDVFAEKKTKLTADELVGLLRRLTPRLYSIASSQAEVDEEVHLTVGLVEYDHNDEKRYGGASSFLAQRLEEGGDVKVFVEHNNNFKLPEDDTTPIIMVGPGTGIAPFRSFIQERENRDAEGKNWLFFGDRTFTQDFLYQVEWQKYLKSGVLSRLDVAFSRDQVEKVYVQHRILENAAQVWQWIQDGAYIYVCGDATRMAKDVHDALVIVAEQEGKMPRDDAEQFINDLRKAKRYQRDVY.

The segment at 1-32 (MSFQKNEYSHKNVSEDNNGQGGNPPIASPLND) is disordered. Residues 87–225 (LTIIFASQTG…AAEEWRKNAL (139 aa)) enclose the Flavodoxin-like domain. FMN is bound by residues 93 to 98 (SQTGNA), 140 to 143 (STNG), and 176 to 185 (LGDSSYEFFC). The FAD-binding FR-type domain occupies 258–472 (QNPYTATLLT…VEHNNNFKLP (215 aa)). FAD is bound by residues threonine 346, alanine 380, 410–413 (RLYS), 428–430 (TVG), tyrosine 434, and 443–446 (GGAS). NADP(+) is bound by residues 543-544 (SR), 549-553 (KVYVQ), and aspartate 585. Tyrosine 623 contributes to the FAD binding site.

This sequence belongs to the NADPH-dependent sulphite reductase flavoprotein subunit CysJ family. It in the N-terminal section; belongs to the flavodoxin family. The protein in the C-terminal section; belongs to the flavoprotein pyridine nucleotide cytochrome reductase family. As to quaternary structure, alpha(8)-beta(8). The alpha component is a flavoprotein, the beta component is a hemoprotein. It depends on FAD as a cofactor. The cofactor is FMN.

The enzyme catalyses hydrogen sulfide + 3 NADP(+) + 3 H2O = sulfite + 3 NADPH + 4 H(+). Its pathway is sulfur metabolism; hydrogen sulfide biosynthesis; hydrogen sulfide from sulfite (NADPH route): step 1/1. Its function is as follows. Component of the sulfite reductase complex that catalyzes the 6-electron reduction of sulfite to sulfide. This is one of several activities required for the biosynthesis of L-cysteine from sulfate. The flavoprotein component catalyzes the electron flow from NADPH -&gt; FAD -&gt; FMN to the hemoprotein component. The protein is Sulfite reductase [NADPH] flavoprotein alpha-component of Vibrio parahaemolyticus serotype O3:K6 (strain RIMD 2210633).